Here is a 204-residue protein sequence, read N- to C-terminus: Guanylate kinase (204 aa).

In terms of domain architecture, Guanylate kinase-like spans 4 to 182 (GMLVVVSGPS…AVNDLEAVLT (179 aa)). 11 to 18 (GPSGAGKG) provides a ligand contact to ATP.

The protein belongs to the guanylate kinase family.

The protein localises to the cytoplasm. The enzyme catalyses GMP + ATP = GDP + ADP. Its function is as follows. Essential for recycling GMP and indirectly, cGMP. In Carboxydothermus hydrogenoformans (strain ATCC BAA-161 / DSM 6008 / Z-2901), this protein is Guanylate kinase.